The primary structure comprises 353 residues: Guanine nucleotide-binding protein G(q) subunit alpha (353 aa).

Residues C3 and C4 are each lipidated (S-palmitoyl cysteine). Positions 32-353 (RELKLLLLGT…QLNLKEYNLV (322 aa)) constitute a G-alpha domain. Residues 35–48 (KLLLLGTGESGKST) are G1 motif. GTP contacts are provided by residues 40–47 (GTGESGKS), 174–180 (LRVRAPT), 199–203 (DVGGQ), 268–271 (NKKD), and A325. Mg(2+) contacts are provided by S47 and T180. The G2 motif stretch occupies residues 172–180 (DILRVRAPT). Residues 195-204 (FRMVDVGGQR) form a G3 motif region. Positions 264 to 271 (ILFLNKKD) are G4 motif. The interval 323-328 (TCATDT) is G5 motif.

It belongs to the G-alpha family. G(q) subfamily. As to quaternary structure, g proteins are composed of 3 units; alpha, beta and gamma. The alpha chain contains the guanine nucleotide binding site.

In terms of biological role, guanine nucleotide-binding proteins (G proteins) are involved as modulators or transducers in various transmembrane signaling systems. The chain is Guanine nucleotide-binding protein G(q) subunit alpha from Homarus americanus (American lobster).